A 444-amino-acid polypeptide reads, in one-letter code: Probable glycine dehydrogenase (decarboxylating) subunit 1 (444 aa).

This sequence belongs to the GcvP family. N-terminal subunit subfamily. In terms of assembly, the glycine cleavage system is composed of four proteins: P, T, L and H. In this organism, the P 'protein' is a heterodimer of two subunits.

The catalysed reaction is N(6)-[(R)-lipoyl]-L-lysyl-[glycine-cleavage complex H protein] + glycine + H(+) = N(6)-[(R)-S(8)-aminomethyldihydrolipoyl]-L-lysyl-[glycine-cleavage complex H protein] + CO2. In terms of biological role, the glycine cleavage system catalyzes the degradation of glycine. The P protein binds the alpha-amino group of glycine through its pyridoxal phosphate cofactor; CO(2) is released and the remaining methylamine moiety is then transferred to the lipoamide cofactor of the H protein. The chain is Probable glycine dehydrogenase (decarboxylating) subunit 1 from Chlorobium luteolum (strain DSM 273 / BCRC 81028 / 2530) (Pelodictyon luteolum).